The sequence spans 189 residues: MAQERRGSREDRQNREERDSEFVDKLVAINRVAKVVKGGRRFGFAALVVVGDQKGRVGFGHGKAREVPEAIRKATEAAKRDLIFVPLRGGRTLHHDVHGRHGAGKVLLRSAKPGTGIIAGGPMRAVFETLGVHDVVAKSTGSSNPYNMVRATFDALKNQMHPKDIAAQRGMKYATLQSRRVSAGVASEE.

An S5 DRBM domain is found at 22–85 (FVDKLVAINR…EAAKRDLIFV (64 aa)).

Belongs to the universal ribosomal protein uS5 family. In terms of assembly, part of the 30S ribosomal subunit. Contacts proteins S4 and S8.

Its function is as follows. With S4 and S12 plays an important role in translational accuracy. In terms of biological role, located at the back of the 30S subunit body where it stabilizes the conformation of the head with respect to the body. The protein is Small ribosomal subunit protein uS5 of Sinorhizobium medicae (strain WSM419) (Ensifer medicae).